Reading from the N-terminus, the 75-residue chain is Putative antitoxin VapB12 (75 aa).

Putative antitoxin component of a possible type II toxin-antitoxin (TA) system. The cognate toxin is VapC12. The protein is Putative antitoxin VapB12 (vapB12) of Mycobacterium tuberculosis (strain CDC 1551 / Oshkosh).